Consider the following 204-residue polypeptide: DPAVDIFDREARFIEQVMEPIRQHFPELKIVFEHITTKEAAQYVQAGNRFLGATITPQHLMFNRNHMLVGGIRPHLFCLPILKRNVHQEALRQAVASGSDRFFLGTDSAPHLKHRKESSCGCAGCFNAPNAIPAYAAVFEQLGALEHFEAFCSLNGPRFYGLPLNEDFIELQRVPTTQPEEIALGNESVIPFLAGETLNWSLKD.

His34 is a Zn(2+) binding site. Leu79 is a substrate binding site. Residue Asp107 coordinates Zn(2+). Asp107 is an active-site residue. Residues His111 and Ala123 each coordinate substrate.

It belongs to the metallo-dependent hydrolases superfamily. DHOase family. Class II DHOase subfamily. Homodimer. The cofactor is Zn(2+).

It catalyses the reaction (S)-dihydroorotate + H2O = N-carbamoyl-L-aspartate + H(+). It participates in pyrimidine metabolism; UMP biosynthesis via de novo pathway; (S)-dihydroorotate from bicarbonate: step 3/3. In terms of biological role, catalyzes the reversible cyclization of carbamoyl aspartate to dihydroorotate. The polypeptide is Dihydroorotase (Serratia marcescens).